A 610-amino-acid chain; its full sequence is Dihydroxy-acid dehydratase (610 aa).

Asp81 is a binding site for Mg(2+). Cys122 lines the [2Fe-2S] cluster pocket. Asp123 and Lys124 together coordinate Mg(2+). Residue Lys124 is modified to N6-carboxylysine. Cys196 contacts [2Fe-2S] cluster. Glu492 serves as a coordination point for Mg(2+). Ser518 acts as the Proton acceptor in catalysis.

The protein belongs to the IlvD/Edd family. In terms of assembly, homodimer. It depends on [2Fe-2S] cluster as a cofactor. Requires Mg(2+) as cofactor.

The enzyme catalyses (2R)-2,3-dihydroxy-3-methylbutanoate = 3-methyl-2-oxobutanoate + H2O. The catalysed reaction is (2R,3R)-2,3-dihydroxy-3-methylpentanoate = (S)-3-methyl-2-oxopentanoate + H2O. The protein operates within amino-acid biosynthesis; L-isoleucine biosynthesis; L-isoleucine from 2-oxobutanoate: step 3/4. It functions in the pathway amino-acid biosynthesis; L-valine biosynthesis; L-valine from pyruvate: step 3/4. Functionally, functions in the biosynthesis of branched-chain amino acids. Catalyzes the dehydration of (2R,3R)-2,3-dihydroxy-3-methylpentanoate (2,3-dihydroxy-3-methylvalerate) into 2-oxo-3-methylpentanoate (2-oxo-3-methylvalerate) and of (2R)-2,3-dihydroxy-3-methylbutanoate (2,3-dihydroxyisovalerate) into 2-oxo-3-methylbutanoate (2-oxoisovalerate), the penultimate precursor to L-isoleucine and L-valine, respectively. The chain is Dihydroxy-acid dehydratase from Ruegeria pomeroyi (strain ATCC 700808 / DSM 15171 / DSS-3) (Silicibacter pomeroyi).